The chain runs to 326 residues: MAEVLTVLEQPNSIKDFLKQDSNIAFLAGGVAGAVSRTVVSPFERVKILLQVQSSTTSYNRGIFSSIRQVYHEEGTKGLFRGNGLNCIRIFPYSAVQFVVYEACKKKLFHVNGNNGQEQLTNTQRLFSGALCGGCSVVATYPLDLIKTRLSIQTANLSSLNRSKAKSISKPPGIWQLLSETYRLEGGLRGLYRGVWPTSLGVVPYVALNFAVYEQLREFGVNSSDAQPSWKSNLYKLTIGAISGGVAQTITYPFDLLRRRFQVLAMGGNELGFRYTSVWDALVTIGRAEGVSGYYKGLAANLFKVVPSTAVSWLVYEVVCDSVRNW.

3 Solcar repeats span residues 20 to 107, 120 to 219, and 231 to 322; these read QDSN…CKKK, LTNT…LREF, and KSNL…VCDS. A run of 6 helical transmembrane segments spans residues 24–40, 84–104, 126–143, 195–213, 237–254, and 297–316; these read IAFL…RTVV, GLNC…YEAC, LFSG…TYPL, VWPT…FAVY, LTIG…TYPF, and GLAA…WLVY.

Belongs to the mitochondrial carrier (TC 2.A.29) family.

It is found in the mitochondrion inner membrane. This is an uncharacterized protein from Saccharomyces cerevisiae (strain ATCC 204508 / S288c) (Baker's yeast).